We begin with the raw amino-acid sequence, 1112 residues long: Cytosolic carboxypeptidase 4 (1112 aa).

The tract at residues 291–345 (TTEPPHDLPEEDFEDDGDDEVDKDSDTEDGKVEDDDLETDVNKLSSKPGLDRPEE) is disordered. A compositionally biased stretch (acidic residues) spans 299–329 (PEEDFEDDGDDEVDKDSDTEDGKVEDDDLET). A Peptidase M14 domain is found at 732 to 1022 (YPYTYTALMT…HPVDGLQGLQ (291 aa)). The Zn(2+) site is built by histidine 804, glutamate 807, and histidine 901. Catalysis depends on glutamate 986, which acts as the Proton donor/acceptor.

The protein belongs to the peptidase M14 family. Interacts with MYLK. Interacts with TCF4. Requires Zn(2+) as cofactor. As to expression, expressed in corneal endothelium.

Its subcellular location is the cytoplasm. The protein resides in the cytosol. It carries out the reaction (L-glutamyl)(n+1)-gamma-L-glutamyl-L-glutamyl-[protein] + H2O = (L-glutamyl)(n)-gamma-L-glutamyl-L-glutamyl-[protein] + L-glutamate. The enzyme catalyses C-terminal L-alpha-aminoacyl-L-glutamyl-L-glutamyl-[tubulin] + H2O = C-terminal L-alpha-aminoacyl-L-glutamyl-[tubulin] + L-glutamate. Metallocarboxypeptidase that mediates deglutamylation of tubulin and non-tubulin target proteins. Catalyzes the removal of polyglutamate side chains present on the gamma-carboxyl group of glutamate residues within the C-terminal tail of tubulin protein. Specifically cleaves tubulin long-side-chains, while it is not able to remove the branching point glutamate. Also catalyzes the removal of polyglutamate residues from the carboxy-terminus of non-tubulin proteins such as MYLK. The chain is Cytosolic carboxypeptidase 4 from Homo sapiens (Human).